Here is a 526-residue protein sequence, read N- to C-terminus: Protein mono-ADP-ribosyltransferase PARP3 (526 aa).

Positions 1–55 are disordered; that stretch reads MAPKRRAPPASQPADGGKKAKGGQEEEEDAWSSALNALKTAPREKPPATIDGQCP. Residues 61-151 enclose the WGR domain; sequence DAKVYEDYDC…DNFVAQPGKY (91 aa). The PARP alpha-helical domain maps to 183-301; that stretch reads PCALDETTQK…DIEVAQSLQA (119 aa). A PARP catalytic domain is found at 312–526; it reads HPLDRDYALL…RIRYLVQLHF (215 aa).

The protein belongs to the ARTD/PARP family.

It is found in the nucleus. It localises to the chromosome. Its subcellular location is the cytoplasm. The protein resides in the cytoskeleton. The protein localises to the microtubule organizing center. It is found in the centrosome. It localises to the centriole. It catalyses the reaction L-aspartyl-[protein] + NAD(+) = 4-O-(ADP-D-ribosyl)-L-aspartyl-[protein] + nicotinamide. It carries out the reaction L-glutamyl-[protein] + NAD(+) = 5-O-(ADP-D-ribosyl)-L-glutamyl-[protein] + nicotinamide. The enzyme catalyses L-lysyl-[protein] + NAD(+) = N(6)-(ADP-D-ribosyl)-L-lysyl-[protein] + nicotinamide + H(+). Functionally, mono-ADP-ribosyltransferase that mediates mono-ADP-ribosylation of target proteins and plays a key role in the response to DNA damage. Mediates mono-ADP-ribosylation of glutamate, aspartate or lysine residues on target proteins. In contrast to PARP1 and PARP2, it is not able to mediate poly-ADP-ribosylation. Involved in DNA repair by mediating mono-ADP-ribosylation of a limited number of acceptor proteins involved in chromatin architecture and in DNA metabolism, such as histone H2B, XRCC5 and XRCC6. ADP-ribosylation follows DNA damage and appears as an obligatory step in a detection/signaling pathway leading to the reparation of DNA strand breaks. Involved in single-strand break repair by catalyzing mono-ADP-ribosylation of histone H2B on 'Glu-2' (H2BE2ADPr) of nucleosomes containing nicked DNA. Cooperates with the XRCC5-XRCC6 (Ku80-Ku70) heterodimer to limit end-resection thereby promoting accurate NHEJ. Associates with a number of DNA repair factors and is involved in the response to exogenous and endogenous DNA strand breaks. Together with APLF, promotes the retention of the LIG4-XRCC4 complex on chromatin and accelerate DNA ligation during non-homologous end-joining (NHEJ). In addition to proteins, also able to ADP-ribosylate DNA: mediates DNA mono-ADP-ribosylation of DNA strand break termini via covalent addition of a single ADP-ribose moiety to a 5'- or 3'-terminal phosphate residues in DNA containing multiple strand breaks. This chain is Protein mono-ADP-ribosyltransferase PARP3, found in Gallus gallus (Chicken).